Here is a 509-residue protein sequence, read N- to C-terminus: Activin receptor type-1 (509 aa).

A signal peptide spans methionine 1–serine 20. Over methionine 21–glutamate 123 the chain is Extracellular. Asparagine 102 is a glycosylation site (N-linked (GlcNAc...) asparagine). A helical membrane pass occupies residues valine 124 to leucine 146. Residues arginine 147 to cysteine 509 are Cytoplasmic-facing. The GS domain maps to serine 178–glutamine 207. The Protein kinase domain occupies isoleucine 208 to leucine 502. Residues valine 214–valine 222 and lysine 235 contribute to the ATP site. The Proton acceptor role is filled by aspartate 336. Residue serine 501 is modified to Phosphoserine.

It belongs to the protein kinase superfamily. TKL Ser/Thr protein kinase family. TGFB receptor subfamily. In terms of assembly, interacts with FKBP1A. Interacts with FCHO1. Interacts with CLU. Interacts with type II receptors AMHR2 and ACVR2A. Interacts with BMP7. Interacts with GDF2/BMP9. Interacts with BMP6 (when glycosylated); the interaction may induce HAMP expression. Interacts with TSC22D1/TSC-22. Mg(2+) is required as a cofactor. The cofactor is Mn(2+). In terms of tissue distribution, urogenital ridge, testis, ovary, brain and lungs.

The protein resides in the membrane. The catalysed reaction is L-threonyl-[receptor-protein] + ATP = O-phospho-L-threonyl-[receptor-protein] + ADP + H(+). The enzyme catalyses L-seryl-[receptor-protein] + ATP = O-phospho-L-seryl-[receptor-protein] + ADP + H(+). Its function is as follows. Bone morphogenetic protein (BMP) type I receptor that is involved in a wide variety of biological processes, including bone, heart, cartilage, nervous, and reproductive system development and regulation. As a type I receptor, forms heterotetrameric receptor complexes with the type II receptors AMHR2, ACVR2A ors ACVR2B. Upon binding of ligands such as BMP7 or GDF2/BMP9 to the heteromeric complexes, type II receptors transphosphorylate ACVR1 intracellular domain. In turn, ACVR1 kinase domain is activated and subsequently phosphorylates SMAD1/5/8 proteins that transduce the signal. In addition to its role in mediating BMP pathway-specific signaling, suppresses TGFbeta/activin pathway signaling by interfering with the binding of activin to its type II receptor. Besides canonical SMAD signaling, can activate non-canonical pathways such as p38 mitogen-activated protein kinases/MAPKs. May promote the expression of HAMP, potentially via its interaction with BMP6. The chain is Activin receptor type-1 (Acvr1) from Rattus norvegicus (Rat).